The primary structure comprises 1984 residues: Spermatogenesis-associated protein 31H1 (1984 aa).

Disordered regions lie at residues 448 to 467, 1045 to 1067, 1181 to 1287, 1326 to 1346, and 1439 to 1984; these read MGLT…TPGP, PMEE…QHSL, YRER…SDSK, RIGA…KPSQ, and QQPR…EATR. 3 stretches are compositionally biased toward polar residues: residues 450–463, 1058–1067, and 1205–1226; these read LTKS…SPGT, TRISESQHSL, and TQAS…QSPA. Residues 1238-1247 show a composition bias toward basic and acidic residues; the sequence is SRPDLVEKTK. Composition is skewed to polar residues over residues 1458–1471 and 1492–1508; these read TDSQ…TASV and RNET…TPGT. Basic and acidic residues-rich tracts occupy residues 1532–1558 and 1568–1579; these read DKLT…ERTR and SPSERSQRSSLE. Tandem repeats lie at residues 1593–1600, 1601–1608, and 1609–1616. The 27 X 8 AA approximate tandem repeat of P-S-E-R-S-H-H-S stretch occupies residues 1593-1935; sequence PSRKNHSSPS…CSPSERSRRS (343 aa). Low complexity predominate over residues 1599 to 1610; the sequence is SSPSERSWRSPS. Over residues 1620–1630 the composition is skewed to basic and acidic residues; the sequence is RSCHSLSERGL. Residues 1636–1647 are compositionally biased toward basic residues; it reads RSHRGPSQRRHH. 3 consecutive repeat copies span residues 1641-1648, 1649-1656, and 1657-1664. Basic and acidic residues predominate over residues 1648–1667; the sequence is SPSERSHRSPSERSHRSSSE. Basic residues predominate over residues 1668–1679; it reads RRHRSPSQRSHR. Positions 1680-1691 are enriched in basic and acidic residues; it reads GPSERSHCSPSE. A run of 19 repeats spans residues 1681–1688, 1689–1696, 1697–1704, 1705–1712, 1713–1720, 1721–1728, 1729–1736, 1737–1744, 1745–1752, 1753–1760, 1761–1768, 1769–1776, 1777–1784, 1785–1792, 1793–1800, 1801–1808, 1848–1855, 1864–1871, and 1880–1887. Over residues 1692–1727 the composition is skewed to basic residues; the sequence is RRHRSPSQRSHRGPSERRHHSPSKRSHRSPARRSHR. Residues 1728–1869 show a composition bias toward basic and acidic residues; the sequence is SPSERSHHSP…SRCSPSERRG (142 aa). Basic and acidic residues-rich tracts occupy residues 1895–1917, 1928–1941, and 1949–1959; these read RTSE…EMRP, PSER…KEGL, and RPSHSLSRDFK. 2 consecutive repeat copies span residues 1921 to 1928 and 1929 to 1935. The span at 1960-1969 shows a compositional bias: polar residues; sequence NQTTLLGTTH.

Expressed in sperm (at protein level).

The sequence is that of Spermatogenesis-associated protein 31H1 from Homo sapiens (Human).